The following is a 48-amino-acid chain: Delta-stichotoxin-Hcr1a (48 aa).

Disulfide bonds link Cys-3–Cys-43, Cys-5–Cys-33, and Cys-26–Cys-44. Lysine amide; partial; in Delta-stichotoxin-Hcr1f is present on Lys-48.

Belongs to the sea anemone sodium channel inhibitory toxin family. Type II subfamily. As to quaternary structure, probably composed of two peptide chains of 12 and 35 residues connected by two disulfide bonds (Cys-3-Cys-43 and Cys-5-Cys-33). Post-translationally, delta-SHTX-Hcr1f (RTX-VI) may be the result of post-translational modification of delta-SHTX-Hcr1a (RTX-III), which would consist of Arg-13 cleavage.

Its subcellular location is the secreted. It localises to the nematocyst. In terms of biological role, binds to site 3 of voltage-gated sodium channels and inhibits the inactivation process. Specifically inhibits mammalian Nav1.3/SCN3A and Nav1.6/SCN8A sodium channels, as well as insect BgNav1 and VdNav1 sodium channels. Binds to site 3 of voltage-gated sodium channels and inhibits the inactivation process. Specifically inhibits mammalian Nav1.2/SCN3A (low inhibition) and Nav1.6/SCN8A sodium channels, as well as insect BgNav1 and VdNav1 sodium channels. This chain is Delta-stichotoxin-Hcr1a, found in Radianthus crispa (Leathery sea anemone).